The sequence spans 102 residues: Small ribosomal subunit protein uS10 (102 aa).

The protein belongs to the universal ribosomal protein uS10 family. In terms of assembly, part of the 30S ribosomal subunit.

In terms of biological role, involved in the binding of tRNA to the ribosomes. This chain is Small ribosomal subunit protein uS10, found in Streptococcus equi subsp. zooepidemicus (strain MGCS10565).